Here is a 1657-residue protein sequence, read N- to C-terminus: Alsin (1657 aa).

RCC1 repeat units lie at residues 60–109, 110–168, and 169–219; these read GEVY…VTDN, GVAY…LSIS, and REIW…LVQC. The disordered stretch occupies residues 432 to 481; sequence TGAQAGSSAIGPEGLKDSREEQVKQESMQGKKSSSLVDIREEETEGGSRR. Residues 445-455 show a composition bias toward basic and acidic residues; the sequence is GLKDSREEQVK. Over residues 456-467 the composition is skewed to polar residues; sequence QESMQGKKSSSL. Phosphoserine occurs at positions 465, 466, 483, and 492. At T510 the chain carries Phosphothreonine. RCC1 repeat units follow at residues 526–577 and 578–628; these read TEVW…LTAK and SQVY…LVDT. K533 bears the N6-acetyllysine mark. Residues 690-885 form the DH domain; sequence GYIASLHELA…ECLALHLGRK (196 aa). The region spanning 901–1007 is the PH domain; that stretch reads GKMTDSLRKP…RAISQAVDQA (107 aa). MORN repeat units follow at residues 1049 to 1071, 1072 to 1094, 1100 to 1122, 1123 to 1145, 1151 to 1173, 1175 to 1197, 1198 to 1220, and 1221 to 1244; these read YDGR…DGKM, YSGM…NKAM, YVGH…SGEV, FEGC…KLTS, FIGQ…TRGE, YMGM…FGLY, YEGN…DDTI, and YEGE…NGDY. Phosphoserine is present on S1335. The VPS9 domain occupies 1513–1657; sequence KQPDIALLGF…YYQIQREKLN (145 aa).

As to quaternary structure, forms a heteromeric complex with ALS2CL. Interacts with ALS2CL.

Its function is as follows. May act as a GTPase regulator. Controls survival and growth of spinal motoneurons. This Pan troglodytes (Chimpanzee) protein is Alsin (ALS2).